Here is a 426-residue protein sequence, read N- to C-terminus: Histidine--tRNA ligase (426 aa).

It belongs to the class-II aminoacyl-tRNA synthetase family. In terms of assembly, homodimer.

The protein localises to the cytoplasm. The catalysed reaction is tRNA(His) + L-histidine + ATP = L-histidyl-tRNA(His) + AMP + diphosphate + H(+). The chain is Histidine--tRNA ligase from Microcystis aeruginosa (strain NIES-843 / IAM M-2473).